The following is a 420-amino-acid chain: UDP-N-acetylglucosamine 1-carboxyvinyltransferase (420 aa).

22–23 (KN) provides a ligand contact to phosphoenolpyruvate. Residue arginine 93 participates in UDP-N-acetyl-alpha-D-glucosamine binding. Residue cysteine 117 is the Proton donor of the active site. At cysteine 117 the chain carries 2-(S-cysteinyl)pyruvic acid O-phosphothioketal. UDP-N-acetyl-alpha-D-glucosamine is bound by residues aspartate 307 and isoleucine 329.

The protein belongs to the EPSP synthase family. MurA subfamily.

It localises to the cytoplasm. It carries out the reaction phosphoenolpyruvate + UDP-N-acetyl-alpha-D-glucosamine = UDP-N-acetyl-3-O-(1-carboxyvinyl)-alpha-D-glucosamine + phosphate. Its pathway is cell wall biogenesis; peptidoglycan biosynthesis. Functionally, cell wall formation. Adds enolpyruvyl to UDP-N-acetylglucosamine. In Cellvibrio japonicus (strain Ueda107) (Pseudomonas fluorescens subsp. cellulosa), this protein is UDP-N-acetylglucosamine 1-carboxyvinyltransferase.